A 437-amino-acid polypeptide reads, in one-letter code: Oxysterol-binding protein homolog 7 (437 aa).

Positions 23–32 (IASNAANSKP) are enriched in polar residues. Residues 23–42 (IASNAANSKPSGADTDDIDE) are disordered. Positions 54–393 (IISQLKPGCD…EDLDYYIYKH (340 aa)) are OSBP-related domain (ORD). A 1,2-diacyl-sn-glycero-3-phospho-(1D-myo-inositol 4-phosphate) is bound by residues 64-69 (LSRITL), 126-129 (KPLN), and 157-158 (HH). A 1,2-diacyl-sn-glycero-3-phospho-L-serine contacts are provided by residues 64–69 (LSRITL) and Asn-129. Residue Ser-183 participates in a 1,2-diacyl-sn-glycero-3-phospho-L-serine binding. A Glycyl lysine isopeptide (Lys-Gly) (interchain with G-Cter in ubiquitin) cross-link involves residue Lys-276. 3 residues coordinate a 1,2-diacyl-sn-glycero-3-phospho-(1D-myo-inositol 4-phosphate): Lys-351, Glu-355, and Arg-359.

Belongs to the OSBP family. As to quaternary structure, interacts with the AAA ATPase VPS4; regulates OSH7 membrane association. VPS4 is required for membrane dissociation of OSH7.

The protein localises to the cytoplasm. The protein resides in the cell membrane. It localises to the endoplasmic reticulum membrane. The enzyme catalyses a 1,2-diacyl-sn-glycero-3-phospho-L-serine(in) = a 1,2-diacyl-sn-glycero-3-phospho-L-serine(out). In terms of biological role, ipid transport protein (LTP) involved in non-vesicular transfer of lipids between membranes. Functions in phosphoinositide-coupled directional transport of various lipids by carrying the lipid molecule in a hydrophobic pocket and transferring it between membranes through the cytosol. Involved in maintenance of intracellular sterol distribution and homeostasis. Involved in lipid countertransport between the endoplasmic reticulum and the plasma membrane. Specifically exchanges phosphatidylserine with phosphatidylinositol 4-phosphate (PI4P), delivering phosphatidylserine to the PM in exchange for PI4P, which is delivered to the ER-localized PI4P phosphatase SAC1 for degradation. Thus, by maintaining a PI4P gradient at the ER/PM interface, SAC1 drives PS transport. Binds phosphatidylserine and PI4P in a mutually exclusive manner. The sequence is that of Oxysterol-binding protein homolog 7 from Saccharomyces cerevisiae (strain ATCC 204508 / S288c) (Baker's yeast).